Consider the following 266-residue polypeptide: Undecaprenyl-diphosphatase (266 aa).

Helical transmembrane passes span 1 to 21 (MDTFQVIILALIQGLTEFLPI), 39 to 59 (QGLAFDVAVHIGSLLAVVLYF), 83 to 103 (SKLAWWIILATLPAVILGFAL), 111 to 131 (LRGPGVIAITTVLFGLLLWWA), 144 to 164 (TGWKKALLIGFAQALALIPGT), 183 to 203 (AAARFSFLMSIPVILGAAILM), 218 to 238 (SLALGVGVSFVAAYTCIHLFL), and 246 to 266 (MTPFVIYRLALGALLCAFIFM).

It belongs to the UppP family.

The protein resides in the cell inner membrane. The catalysed reaction is di-trans,octa-cis-undecaprenyl diphosphate + H2O = di-trans,octa-cis-undecaprenyl phosphate + phosphate + H(+). Functionally, catalyzes the dephosphorylation of undecaprenyl diphosphate (UPP). Confers resistance to bacitracin. The chain is Undecaprenyl-diphosphatase from Shewanella woodyi (strain ATCC 51908 / MS32).